The sequence spans 228 residues: Rab-like protein 2A (228 aa).

Residues 28 to 35 (GDSAVGKS), 76 to 80 (DTAGQ), and 133 to 136 (NKID) each bind GTP. The tract at residues 200–228 (LEQEEEDVPDQEQSSSIETPSEEVASPHS) is disordered.

Belongs to the small GTPase superfamily. Rab family. Interacts with IFT27, IFT81, IFT172, ATP6V1E1, HK1, LDHC, MAPRE1 and HSPA2. In terms of tissue distribution, expressed in the testis.

In terms of biological role, plays an essential role in male fertility, sperm intra-flagellar transport, and tail assembly. Binds, in a GTP-regulated manner, to a specific set of effector proteins including key proteins involved in cilia development and function and delivers them into the growing sperm tail. This Homo sapiens (Human) protein is Rab-like protein 2A (RABL2A).